The sequence spans 84 residues: MSKSLQLIVTVLCIFTILVLGEICLAKGQPLEEMVECKEVLWPEECKYDACAFACALKRHGKGGCLEGPDYRSACICQYACKRS.

Positions 1–28 (MSKSLQLIVTVLCIFTILVLGEICLAKG) are cleaved as a signal peptide. 4 disulfide bridges follow: cysteine 37-cysteine 81, cysteine 46-cysteine 65, cysteine 51-cysteine 75, and cysteine 55-cysteine 77.

The protein belongs to the DEFL family.

The protein localises to the secreted. The chain is Defensin-like protein 140 (LCR15) from Arabidopsis thaliana (Mouse-ear cress).